We begin with the raw amino-acid sequence, 330 residues long: Polyprenal reductase (330 aa).

Topologically, residues 1–16 (MAGWAGFELSALNPLR) are cytoplasmic. A helical membrane pass occupies residues 17-37 (TLWLALAAAFLFALLLQLAPA). The Lumenal segment spans residues 38–80 (RLLPSCALFQDLLRYGKTKQSGSRRPAVCRAFDVPKRYFSHFY). A helical membrane pass occupies residues 81-101 (VISVVWNGSLLWLLSQSLFLG). At 102-132 (APFPNWLSALLRTLGATQFQALEMESKASRM) the chain is on the cytoplasmic side. A helical membrane pass occupies residues 133-153 (PAAELALSAFLVLVFLWVHSL). Residues 154–169 (RRLFECFYVSVFSNAA) lie on the Lumenal side of the membrane. A helical membrane pass occupies residues 170–190 (IHVVQYCFGLVYYVLVGLTVL). At 191–206 (SQVPMDDKNVYVLGKN) the chain is on the cytoplasmic side. The helical transmembrane segment at 207 to 227 (LLIQARWFHILGMVMFFWSSA) threads the bilayer. Residues 228 to 277 (HQYKCHVILSNLRRNKKGVVIHCQHRIPFGDWFEYVSSANYLAELMIYIS) lie on the Lumenal side of the membrane. Residues 278 to 298 (MAVTFGLHNLTWWLVVTYVFS) traverse the membrane as a helical segment. The Cytoplasmic portion of the chain corresponds to 299-330 (SQALSAFFNHKFYRSTFVSYPKHRKAFLPFLF).

This sequence belongs to the steroid 5-alpha reductase family. Polyprenal reductase subfamily.

The protein resides in the endoplasmic reticulum membrane. The catalysed reaction is a di-trans,poly-cis-dolichal + NADP(+) = a di-trans,poly-cis-polyprenal + NADPH + H(+). The enzyme catalyses a 3-oxo-5alpha-steroid + NADP(+) = a 3-oxo-Delta(4)-steroid + NADPH + H(+). It catalyses the reaction androst-4-ene-3,17-dione + NADPH + H(+) = 5alpha-androstan-3,17-dione + NADP(+). It carries out the reaction 17beta-hydroxy-5alpha-androstan-3-one + NADP(+) = testosterone + NADPH + H(+). The protein operates within protein modification; protein glycosylation. Functionally, plays a key role in early steps of protein N-linked glycosylation by being involved in the conversion of polyprenol into dolichol. Acts as a polyprenal reductase that mediates the reduction of polyprenal into dolichal in a NADP-dependent mechanism. Dolichols are required for the synthesis of dolichol-linked monosaccharides and the oligosaccharide precursor used for N-glycosylation. Also able to convert testosterone (T) into 5-alpha-dihydrotestosterone (DHT). The protein is Polyprenal reductase of Mus musculus (Mouse).